Consider the following 79-residue polypeptide: Toxin ICK-20 (79 aa).

An N-terminal signal peptide occupies residues 1–20 (MMKYFLVLCLVVLGVAAVQA). Disulfide bonds link C43–C57, C50–C61, C56–C78, and C68–C74. The N-linked (GlcNAc...) asparagine glycan is linked to N71.

Belongs to the neurotoxin 13 (insecticidal toxin ABC) family. ICK-21 subfamily. As to expression, expressed by the venom gland.

The protein localises to the secreted. Its function is as follows. Ion channel inhibitor. In Trittame loki (Brush-footed trapdoor spider), this protein is Toxin ICK-20.